We begin with the raw amino-acid sequence, 100 residues long: MRALTLLALLALAALCIAGQAGAKPSGAESSKGAAFVSKQEGSEVVKRPRRYLYQWLGAPVPYPDPLEPRREVCELNPDCDELADHIGFQEAYRRFYGPV.

An N-terminal signal peptide occupies residues 1 to 23; that stretch reads MRALTLLALLALAALCIAGQAGA. A propeptide spanning residues 24-51 is cleaved from the precursor; sequence KPSGAESSKGAAFVSKQEGSEVVKRPRR. The Gla domain maps to 52 to 98; the sequence is YLYQWLGAPVPYPDPLEPRREVCELNPDCDELADHIGFQEAYRRFYG. Ca(2+) is bound by residues E68, E72, E75, and D81. Residue E68 is modified to 4-carboxyglutamate; partial. 4-carboxyglutamate is present on residues E72 and E75. C74 and C80 are disulfide-bonded.

Belongs to the osteocalcin/matrix Gla protein family. Post-translationally, gamma-carboxyglutamate residues are formed by vitamin K dependent carboxylation by GGCX. These residues are essential for the binding of calcium. Decarboxylation promotes the hormone activity.

It is found in the secreted. Functionally, bone protein that constitutes 1-2% of the total bone protein, and which acts as a negative regulator of bone formation. Functions to limit bone formation without impairing bone resorption or mineralization. It binds strongly to apatite and calcium. Its function is as follows. The uncarboxylated form acts as a hormone secreted by osteoblasts, which regulates different cellular processes, such as energy metabolism, male fertility and brain development. Regulates of energy metabolism by acting as a hormone favoring pancreatic beta-cell proliferation, insulin secretion and sensitivity and energy expenditure. Uncarboxylated osteocalcin hormone also promotes testosterone production in the testes: acts as a ligand for G protein-coupled receptor GPRC6A at the surface of Leydig cells, initiating a signaling response that promotes the expression of enzymes required for testosterone synthesis in a CREB-dependent manner. Also acts as a regulator of brain development: osteocalcin hormone crosses the blood-brain barrier and acts as a ligand for GPR158 on neurons, initiating a signaling response that prevents neuronal apoptosis in the hippocampus, favors the synthesis of all monoamine neurotransmitters and inhibits that of gamma-aminobutyric acid (GABA). Osteocalcin also crosses the placenta during pregnancy and maternal osteocalcin is required for fetal brain development. The protein is Osteocalcin (BGLAP) of Homo sapiens (Human).